A 184-amino-acid polypeptide reads, in one-letter code: uncharacterized protein (184 aa).

The first 23 residues, 1 to 23 (MFCLLHLCFYLANFASSIKRTHA), serve as a signal peptide directing secretion.

Its subcellular location is the secreted. This is an uncharacterized protein from Homo sapiens (Human).